The sequence spans 136 residues: Protein PsiE homolog (136 aa).

4 helical membrane passes run 15–35, 58–78, 83–103, and 108–128; these read AMQT…IVFL, VEGL…VKYF, HFPL…LIII, and PMAV…LWLC.

The protein belongs to the PsiE family.

It is found in the cell inner membrane. This Klebsiella pneumoniae (strain 342) protein is Protein PsiE homolog.